We begin with the raw amino-acid sequence, 463 residues long: Probable Xaa-Pro aminopeptidase PEPP (463 aa).

Asp259, Asp270, Glu393, and Glu433 together coordinate Mn(2+).

Belongs to the peptidase M24B family. The cofactor is Mn(2+).

It carries out the reaction Release of any N-terminal amino acid, including proline, that is linked to proline, even from a dipeptide or tripeptide.. Its function is as follows. Catalyzes the removal of a penultimate prolyl residue from the N-termini of peptides. The protein is Probable Xaa-Pro aminopeptidase PEPP (PEPP) of Phaeosphaeria nodorum (strain SN15 / ATCC MYA-4574 / FGSC 10173) (Glume blotch fungus).